We begin with the raw amino-acid sequence, 214 residues long: Large ribosomal subunit protein uL3 (214 aa).

The disordered stretch occupies residues 131–155 (GAQRTSHGNSRSHRVPGSIGMAQDP). Glutamine 153 is modified (N5-methylglutamine).

The protein belongs to the universal ribosomal protein uL3 family. Part of the 50S ribosomal subunit. Forms a cluster with proteins L14 and L19. In terms of processing, methylated by PrmB.

Functionally, one of the primary rRNA binding proteins, it binds directly near the 3'-end of the 23S rRNA, where it nucleates assembly of the 50S subunit. In Neisseria gonorrhoeae (strain ATCC 700825 / FA 1090), this protein is Large ribosomal subunit protein uL3.